The primary structure comprises 477 residues: S-triazine hydrolase (477 aa).

Low complexity-rich tracts occupy residues 38 to 73 and 120 to 132; these read SPTTSTSAAPKSSTPPGWQCSPASSTPTPTSHKSSS and PLSSTTRTSDPTT. Disordered stretches follow at residues 38-77 and 120-143; these read SPTTSTSAAPKSSTPPGWQCSPASSTPTPTSHKSSSGVVH and PLSSTTRTSDPTTSPAPGPPGSPF.

This sequence belongs to the metallo-dependent hydrolases superfamily. ATZ/TRZ family.

It participates in xenobiotic degradation; melamine degradation. Hydrolytic deamination of the S-triazine substrate melamine. In Gordonia rubripertincta (Rhodococcus corallinus), this protein is S-triazine hydrolase (trzA).